Here is a 61-residue protein sequence, read N- to C-terminus: Large ribosomal subunit protein uL30 (61 aa).

It belongs to the universal ribosomal protein uL30 family. Part of the 50S ribosomal subunit.

This is Large ribosomal subunit protein uL30 from Chromohalobacter salexigens (strain ATCC BAA-138 / DSM 3043 / CIP 106854 / NCIMB 13768 / 1H11).